The following is a 475-amino-acid chain: Dihydrolipoyl dehydrogenase (475 aa).

Residues 36–45 (ERYSTLGGVC), Lys-54, and Gly-117 each bind FAD. Cys-45 and Cys-50 are oxidised to a cystine. Residues 182 to 186 (GGGII), Glu-205, Val-238, and 270 to 273 (AIGR) contribute to the NAD(+) site. Positions 313 and 321 each coordinate FAD. His-445 acts as the Proton acceptor in catalysis.

This sequence belongs to the class-I pyridine nucleotide-disulfide oxidoreductase family. The cofactor is FAD.

Its subcellular location is the cytoplasm. The catalysed reaction is N(6)-[(R)-dihydrolipoyl]-L-lysyl-[protein] + NAD(+) = N(6)-[(R)-lipoyl]-L-lysyl-[protein] + NADH + H(+). Its function is as follows. The branched-chain alpha-keto dehydrogenase complex catalyzes the overall conversion of alpha-keto acids to acyl-CoA and CO(2). It contains multiple copies of 3 enzymatic components: branched-chain alpha-keto acid decarboxylase (E1), lipoamide acyltransferase (E2) and lipoamide dehydrogenase (E3). The sequence is that of Dihydrolipoyl dehydrogenase (lpd) from Vibrio parahaemolyticus serotype O3:K6 (strain RIMD 2210633).